The chain runs to 636 residues: Chaperone protein HtpG (636 aa).

The segment at 1-329 (MSKEHGAAAE…TEDLPLNISR (329 aa)) is a; substrate-binding. A b region spans residues 330-550 (ETLQENALIA…DGGMTASMEK (221 aa)). The c stretch occupies residues 551–636 (LMRVMNKDES…TGWYAEVRKL (86 aa)).

The protein belongs to the heat shock protein 90 family. As to quaternary structure, homodimer.

The protein localises to the cytoplasm. Its function is as follows. Molecular chaperone. Has ATPase activity. In Oleidesulfovibrio alaskensis (strain ATCC BAA-1058 / DSM 17464 / G20) (Desulfovibrio alaskensis), this protein is Chaperone protein HtpG.